Consider the following 291-residue polypeptide: Probable L-ascorbate peroxidase 3, peroxisomal (291 aa).

The active-site Proton acceptor is the H41. The interval 114-133 (YVPGRRDSSDSPEEGRLPDA) is disordered. Residues 116–133 (PGRRDSSDSPEEGRLPDA) are compositionally biased toward basic and acidic residues. Heme b is bound at residue H161. 3 residues coordinate K(+): T162, T178, and D185. A helical membrane pass occupies residues 263–283 (LLMQTAAGVAVAAAVVAWAYL).

This sequence belongs to the peroxidase family. Ascorbate peroxidase subfamily. It depends on heme b as a cofactor. As to expression, expressed in stems.

Its subcellular location is the peroxisome membrane. The catalysed reaction is L-ascorbate + H2O2 = L-dehydroascorbate + 2 H2O. Its function is as follows. Plays a key role in hydrogen peroxide removal. The polypeptide is Probable L-ascorbate peroxidase 3, peroxisomal (Oryza sativa subsp. japonica (Rice)).